The sequence spans 407 residues: Putative polysaccharide ligase RF_0568 (407 aa).

The next 10 membrane-spanning stretches (helical) occupy residues 15–35, 71–91, 100–120, 129–149, 166–186, 203–223, 229–249, 272–292, 324–344, and 379–399; these read LGMV…LMLF, MTIK…LFAI, FIQV…VPFG, LILG…SHGF, GCAL…SSGK, ISDS…FILA, IFFK…PVIA, LFIW…GYGF, ILQI…CLVY, and IWQI…KLLV.

The protein belongs to the O-antigen ligase family.

It localises to the membrane. The polypeptide is Putative polysaccharide ligase RF_0568 (Rickettsia felis (strain ATCC VR-1525 / URRWXCal2) (Rickettsia azadi)).